Here is a 176-residue protein sequence, read N- to C-terminus: Shikimate kinase (176 aa).

10–15 (TSGKSS) is a binding site for ATP. Residue S14 coordinates Mg(2+). D32, G81, and R138 together coordinate substrate.

The protein belongs to the shikimate kinase family. As to quaternary structure, monomer. Mg(2+) is required as a cofactor.

Its subcellular location is the cytoplasm. It catalyses the reaction shikimate + ATP = 3-phosphoshikimate + ADP + H(+). Its pathway is metabolic intermediate biosynthesis; chorismate biosynthesis; chorismate from D-erythrose 4-phosphate and phosphoenolpyruvate: step 5/7. Functionally, catalyzes the specific phosphorylation of the 3-hydroxyl group of shikimic acid using ATP as a cosubstrate. The polypeptide is Shikimate kinase (Chlamydia pneumoniae (Chlamydophila pneumoniae)).